Consider the following 835-residue polypeptide: Leucine--tRNA ligase (835 aa).

Positions 42–52 match the 'HIGH' region motif; that stretch reads PYPSGRIHMGH. The short motif at 612 to 616 is the 'KMSKS' region element; that stretch reads KMSKS. Position 615 (Lys615) interacts with ATP.

Belongs to the class-I aminoacyl-tRNA synthetase family.

The protein resides in the cytoplasm. The enzyme catalyses tRNA(Leu) + L-leucine + ATP = L-leucyl-tRNA(Leu) + AMP + diphosphate. In Rhizorhabdus wittichii (strain DSM 6014 / CCUG 31198 / JCM 15750 / NBRC 105917 / EY 4224 / RW1) (Sphingomonas wittichii), this protein is Leucine--tRNA ligase.